The chain runs to 151 residues: Small ribosomal subunit protein uS15 (151 aa).

The interval 1 to 20 (MGRMHSNGKGISGSSLPYNR) is disordered.

This sequence belongs to the universal ribosomal protein uS15 family. Component of the small ribosomal subunit. Part of the small subunit (SSU) processome, composed of more than 70 proteins and the RNA chaperone small nucleolar RNA (snoRNA) U3.

The protein localises to the cytoplasm. It is found in the nucleus. It localises to the nucleolus. Component of the small ribosomal subunit. The ribosome is a large ribonucleoprotein complex responsible for the synthesis of proteins in the cell. Part of the small subunit (SSU) processome, first precursor of the small eukaryotic ribosomal subunit. During the assembly of the SSU processome in the nucleolus, many ribosome biogenesis factors, an RNA chaperone and ribosomal proteins associate with the nascent pre-rRNA and work in concert to generate RNA folding, modifications, rearrangements and cleavage as well as targeted degradation of pre-ribosomal RNA by the RNA exosome. This chain is Small ribosomal subunit protein uS15 (rps13), found in Dictyostelium discoideum (Social amoeba).